A 518-amino-acid polypeptide reads, in one-letter code: Probable bifunctional methylthioribulose-1-phosphate dehydratase/enolase-phosphatase E1 (518 aa).

The methylthioribulose-1-phosphate dehydratase stretch occupies residues 1 to 247 (MAAAPPAVAV…AIKLHQIGLD (247 aa)). Cysteine 119 serves as a coordination point for substrate. Residues histidine 137 and histidine 139 each coordinate Zn(2+). Glutamate 162 acts as the Proton donor/acceptor; for methylthioribulose-1-phosphate dehydratase activity in catalysis. A Zn(2+)-binding site is contributed by histidine 212. Positions 279–518 (IVLDIEGTTT…FKTITSFAEI (240 aa)) are enolase-phosphatase E1. Positions 282 and 284 each coordinate Mg(2+). Substrate-binding positions include 417 to 418 (SS) and lysine 451. Aspartate 477 provides a ligand contact to Mg(2+).

It in the N-terminal section; belongs to the aldolase class II family. MtnB subfamily. In the C-terminal section; belongs to the HAD-like hydrolase superfamily. MasA/MtnC family. The cofactor is Zn(2+). It depends on Mg(2+) as a cofactor.

It catalyses the reaction 5-(methylsulfanyl)-D-ribulose 1-phosphate = 5-methylsulfanyl-2,3-dioxopentyl phosphate + H2O. The catalysed reaction is 5-methylsulfanyl-2,3-dioxopentyl phosphate + H2O = 1,2-dihydroxy-5-(methylsulfanyl)pent-1-en-3-one + phosphate. The protein operates within amino-acid biosynthesis; L-methionine biosynthesis via salvage pathway; L-methionine from S-methyl-5-thio-alpha-D-ribose 1-phosphate: step 2/6. It functions in the pathway amino-acid biosynthesis; L-methionine biosynthesis via salvage pathway; L-methionine from S-methyl-5-thio-alpha-D-ribose 1-phosphate: step 3/6. It participates in amino-acid biosynthesis; L-methionine biosynthesis via salvage pathway; L-methionine from S-methyl-5-thio-alpha-D-ribose 1-phosphate: step 4/6. This chain is Probable bifunctional methylthioribulose-1-phosphate dehydratase/enolase-phosphatase E1, found in Populus trichocarpa (Western balsam poplar).